The sequence spans 2166 residues: Protein TIC236, chloroplastic (2166 aa).

Residues Met-1–Arg-37 constitute a chloroplast transit peptide. Topologically, residues Ile-38–Gly-101 are stromal. A helical transmembrane segment spans residues Leu-102–Trp-122. The Chloroplast intermembrane segment spans residues Tyr-123 to Asp-2166. Positions Met-1611–Arg-1649 are disordered. Over residues Ala-1631–Arg-1649 the composition is skewed to basic and acidic residues.

The protein belongs to the TamB family. As to quaternary structure, part of the TIC complex, which can interact with components of the TOC complex to form a larger import complex. Interacts with the TOC complex component TOC75-3.

It localises to the plastid. The protein resides in the chloroplast inner membrane. Its subcellular location is the chloroplast intermembrane space. Its function is as follows. Part of the inner chloroplast membrane translocon complex (TIC) which associates with the outer chloroplast membrane translocon complex (TOC) and forms a supercomplex involved in protein precursor import into the chloroplast stroma. Required for the import of HSP93, TIC40 and RBCS protein precursors in the chloroplast stroma. Links the outer and inner membrane translocons of the chloroplast envelope. This is Protein TIC236, chloroplastic from Arabidopsis thaliana (Mouse-ear cress).